The primary structure comprises 177 residues: Transcription termination/antitermination protein NusG (177 aa).

One can recognise a KOW domain in the interval 126–156 (PGETVRVIDGPFADFNGVVEEVNYEKSRIQV).

Belongs to the NusG family.

Participates in transcription elongation, termination and antitermination. In Pseudomonas aeruginosa (strain ATCC 15692 / DSM 22644 / CIP 104116 / JCM 14847 / LMG 12228 / 1C / PRS 101 / PAO1), this protein is Transcription termination/antitermination protein NusG.